The primary structure comprises 291 residues: Tyrosine isonitrile desaturase (291 aa).

Positions 110, 112, and 259 each coordinate Fe cation.

This sequence belongs to the TfdA dioxygenase family. As to quaternary structure, homotrimer in solution. It depends on Fe(2+) as a cofactor.

The catalysed reaction is (2S)-3-(4-hydroxyphenyl)-2-isocyanopropanoate + 2-oxoglutarate + O2 = (2E)-3-(4-hydroxyphenyl)-2-isocyanoprop-2-enoate + succinate + CO2 + H2O. Functionally, involved in the biosynthesis of paerucumarin, a cyclized isocyano derivative of tyrosine. Catalyzes the 2-oxoglutarate-dependent oxidation of tyrosine isonitrile. The polypeptide is Tyrosine isonitrile desaturase (Pseudomonas aeruginosa (strain ATCC 15692 / DSM 22644 / CIP 104116 / JCM 14847 / LMG 12228 / 1C / PRS 101 / PAO1)).